We begin with the raw amino-acid sequence, 354 residues long: Protein Wnt-9a (354 aa).

The signal sequence occupies residues Met1 to Pro15. 5 cysteine pairs are disulfide-bonded: Cys85-Cys96, Cys133-Cys141, Cys143-Cys160, Cys207-Cys221, and Cys209-Cys216. Asn95 is a glycosylation site (N-linked (GlcNAc...) asparagine). Ser213 is lipidated: O-palmitoleoyl serine; by PORCN. The segment at Gly246 to Gln271 is disordered. 6 disulfide bridges follow: Cys288-Cys313, Cys302-Cys308, Cys312-Cys352, Cys328-Cys343, Cys330-Cys340, and Cys335-Cys336.

The protein belongs to the Wnt family. Palmitoleoylation is required for efficient binding to frizzled receptors. Depalmitoleoylation leads to Wnt signaling pathway inhibition.

The protein localises to the secreted. It is found in the extracellular space. Its subcellular location is the extracellular matrix. Functionally, ligand for members of the frizzled family of seven transmembrane receptors. Functions in the canonical Wnt/beta-catenin signaling pathway. Plays a role in embryonic chondrocyte maturation and in embryonic bone mineralization. This is Protein Wnt-9a (WNT9A) from Gallus gallus (Chicken).